A 344-amino-acid polypeptide reads, in one-letter code: Leucine-rich repeat-containing protein 75A (344 aa).

The segment at 1–25 is disordered; that stretch reads MGTRQTKGSLAERASPGAAPGPRRE. Over residues 11 to 21 the composition is skewed to low complexity; sequence AERASPGAAPG. 2 LRR repeats span residues 204–217 and 229–242; these read VDSV…LTDD and LPRL…GNRL. Residues 295–344 form a disordered region; it reads LPTILELGEGPGSGEEVREGTVGQEDPGGGPVAPAEDHHEGKETVAAAQT.

The protein belongs to the LRRC75 family.

This is Leucine-rich repeat-containing protein 75A (LRRC75A) from Homo sapiens (Human).